We begin with the raw amino-acid sequence, 311 residues long: Aspartate carbamoyltransferase catalytic subunit (311 aa).

The carbamoyl phosphate site is built by R58 and T59. Residue K86 participates in L-aspartate binding. Carbamoyl phosphate is bound by residues R108, H136, and Q139. Residues R169 and R224 each coordinate L-aspartate. Carbamoyl phosphate-binding residues include G265 and P266.

The protein belongs to the aspartate/ornithine carbamoyltransferase superfamily. ATCase family. Heterododecamer (2C3:3R2) of six catalytic PyrB chains organized as two trimers (C3), and six regulatory PyrI chains organized as three dimers (R2).

It catalyses the reaction carbamoyl phosphate + L-aspartate = N-carbamoyl-L-aspartate + phosphate + H(+). It functions in the pathway pyrimidine metabolism; UMP biosynthesis via de novo pathway; (S)-dihydroorotate from bicarbonate: step 2/3. Its function is as follows. Catalyzes the condensation of carbamoyl phosphate and aspartate to form carbamoyl aspartate and inorganic phosphate, the committed step in the de novo pyrimidine nucleotide biosynthesis pathway. This Geotalea uraniireducens (strain Rf4) (Geobacter uraniireducens) protein is Aspartate carbamoyltransferase catalytic subunit.